A 676-amino-acid polypeptide reads, in one-letter code: Beta-taxilin (676 aa).

Disordered regions lie at residues Met-1 to Glu-55 and Ala-71 to Leu-131. Polar residues-rich tracts occupy residues Glu-8 to Ser-25 and Gln-34 to Gln-45. The segment covering Val-75–Val-92 has biased composition (basic and acidic residues). Acidic residues predominate over residues Gly-93–Glu-105. Basic and acidic residues predominate over residues Glu-106 to Leu-131. A coiled-coil region spans residues Glu-157 to Leu-461. Positions Glu-464–Gln-486 are disordered.

This sequence belongs to the taxilin family. Specifically expressed in skeletal and cardiac muscle.

The protein localises to the cytoplasm. Its function is as follows. Promotes neurite-outgrowth. May be involved in intracellular vesicle traffic. This Gallus gallus (Chicken) protein is Beta-taxilin (TXLNB).